The chain runs to 310 residues: ADP-L-glycero-D-manno-heptose-6-epimerase (310 aa).

Residues 10–11 (FI), 31–32 (DN), lysine 38, lysine 53, 75–79 (EGACS), and asparagine 92 each bind NADP(+). Tyrosine 140 functions as the Proton acceptor in the catalytic mechanism. Lysine 144 provides a ligand contact to NADP(+). Asparagine 169 serves as a coordination point for substrate. The NADP(+) site is built by valine 170 and lysine 178. Lysine 178 acts as the Proton acceptor in catalysis. Residues serine 180, histidine 187, 201–204 (FSGS), arginine 209, and tyrosine 272 contribute to the substrate site.

This sequence belongs to the NAD(P)-dependent epimerase/dehydratase family. HldD subfamily. In terms of assembly, homopentamer. It depends on NADP(+) as a cofactor.

It catalyses the reaction ADP-D-glycero-beta-D-manno-heptose = ADP-L-glycero-beta-D-manno-heptose. The protein operates within nucleotide-sugar biosynthesis; ADP-L-glycero-beta-D-manno-heptose biosynthesis; ADP-L-glycero-beta-D-manno-heptose from D-glycero-beta-D-manno-heptose 7-phosphate: step 4/4. Catalyzes the interconversion between ADP-D-glycero-beta-D-manno-heptose and ADP-L-glycero-beta-D-manno-heptose via an epimerization at carbon 6 of the heptose. The sequence is that of ADP-L-glycero-D-manno-heptose-6-epimerase from Pectobacterium carotovorum subsp. carotovorum (strain PC1).